The sequence spans 389 residues: Succinate--CoA ligase [ADP-forming] subunit beta (389 aa).

The ATP-grasp domain maps to 9 to 246 (KEILRRHNAN…ITEEDPYEVK (238 aa)). ATP contacts are provided by residues Lys48, 55–57 (GRG), Glu101, Leu104, and Glu109. The Mg(2+) site is built by Asn201 and Asp215. Substrate contacts are provided by residues Asn266 and 323 to 325 (GIV).

The protein belongs to the succinate/malate CoA ligase beta subunit family. In terms of assembly, heterotetramer of two alpha and two beta subunits. Mg(2+) serves as cofactor.

It catalyses the reaction succinate + ATP + CoA = succinyl-CoA + ADP + phosphate. The enzyme catalyses GTP + succinate + CoA = succinyl-CoA + GDP + phosphate. It functions in the pathway carbohydrate metabolism; tricarboxylic acid cycle; succinate from succinyl-CoA (ligase route): step 1/1. Functionally, succinyl-CoA synthetase functions in the citric acid cycle (TCA), coupling the hydrolysis of succinyl-CoA to the synthesis of either ATP or GTP and thus represents the only step of substrate-level phosphorylation in the TCA. The beta subunit provides nucleotide specificity of the enzyme and binds the substrate succinate, while the binding sites for coenzyme A and phosphate are found in the alpha subunit. The protein is Succinate--CoA ligase [ADP-forming] subunit beta of Leptospira biflexa serovar Patoc (strain Patoc 1 / Ames).